Consider the following 254-residue polypeptide: Diphthine synthase (254 aa).

Residues Asp-83, Leu-86, 111 to 112, Leu-163, and Val-205 contribute to the S-adenosyl-L-methionine site; that span reads SI.

It belongs to the diphthine synthase family. As to quaternary structure, homodimer.

It catalyses the reaction 2-[(3S)-amino-3-carboxypropyl]-L-histidyl-[translation elongation factor 2] + 3 S-adenosyl-L-methionine = diphthine-[translation elongation factor 2] + 3 S-adenosyl-L-homocysteine + 3 H(+). It participates in protein modification; peptidyl-diphthamide biosynthesis. In terms of biological role, S-adenosyl-L-methionine-dependent methyltransferase that catalyzes the trimethylation of the amino group of the modified target histidine residue in translation elongation factor 2 (EF-2), to form an intermediate called diphthine. The three successive methylation reactions represent the second step of diphthamide biosynthesis. The sequence is that of Diphthine synthase from Pyrobaculum aerophilum (strain ATCC 51768 / DSM 7523 / JCM 9630 / CIP 104966 / NBRC 100827 / IM2).